Here is a 268-residue protein sequence, read N- to C-terminus: Putative hydro-lyase ACICU_01268 (268 aa).

Belongs to the D-glutamate cyclase family.

The sequence is that of Putative hydro-lyase ACICU_01268 from Acinetobacter baumannii (strain ACICU).